An 880-amino-acid polypeptide reads, in one-letter code: Alanine--tRNA ligase (880 aa).

His566, His570, Cys668, and His672 together coordinate Zn(2+).

The protein belongs to the class-II aminoacyl-tRNA synthetase family. Zn(2+) serves as cofactor.

Its subcellular location is the cytoplasm. It catalyses the reaction tRNA(Ala) + L-alanine + ATP = L-alanyl-tRNA(Ala) + AMP + diphosphate. Catalyzes the attachment of alanine to tRNA(Ala) in a two-step reaction: alanine is first activated by ATP to form Ala-AMP and then transferred to the acceptor end of tRNA(Ala). Also edits incorrectly charged Ser-tRNA(Ala) and Gly-tRNA(Ala) via its editing domain. The protein is Alanine--tRNA ligase of Nostoc sp. (strain PCC 7120 / SAG 25.82 / UTEX 2576).